Here is a 364-residue protein sequence, read N- to C-terminus: Probable UDP-arabinopyranose mutase 1 (364 aa).

The short motif at 103-105 is the DXD motif element; the sequence is DDD. N-linked (Glc...) arginine glycosylation is present at arginine 151.

Belongs to the RGP family. Homopentamer or homohexamer. Mn(2+) serves as cofactor. Mg(2+) is required as a cofactor. Reversibly glycosylated by UDP-glucose, UDP-xylose and UDP-galactose, but not UDP-mannose.

It is found in the secreted. The protein localises to the cell wall. Its subcellular location is the cell junction. It localises to the plasmodesma. The protein resides in the golgi apparatus. The enzyme catalyses UDP-beta-L-arabinofuranose = UDP-beta-L-arabinopyranose. Its activity is regulated as follows. Inhibited by inhibitor protein (IP) which may be a form of sucrose synthase. Its function is as follows. Probable UDP-L-arabinose mutase involved in the biosynthesis of cell wall non-cellulosic polysaccharides. Was initially shown to possess an autoglycosylating activity which is dependent on the presence of UDP-glucose and manganese. In Pisum sativum (Garden pea), this protein is Probable UDP-arabinopyranose mutase 1.